A 175-amino-acid polypeptide reads, in one-letter code: 6,7-dimethyl-8-ribityllumazine synthase (175 aa).

5-amino-6-(D-ribitylamino)uracil contacts are provided by residues Phe-24, 58–60 (ALE), and 82–84 (AVI). 87 to 88 (ET) provides a ligand contact to (2S)-2-hydroxy-3-oxobutyl phosphate. The active-site Proton donor is the His-90. Asn-115 lines the 5-amino-6-(D-ribitylamino)uracil pocket. Residue Arg-129 coordinates (2S)-2-hydroxy-3-oxobutyl phosphate. The interval 150–175 (ALEPEEDDEDEDDEDEDFDDEEDDGR) is disordered. Residues 152 to 175 (EPEEDDEDEDDEDEDFDDEEDDGR) are compositionally biased toward acidic residues.

This sequence belongs to the DMRL synthase family.

The enzyme catalyses (2S)-2-hydroxy-3-oxobutyl phosphate + 5-amino-6-(D-ribitylamino)uracil = 6,7-dimethyl-8-(1-D-ribityl)lumazine + phosphate + 2 H2O + H(+). It participates in cofactor biosynthesis; riboflavin biosynthesis; riboflavin from 2-hydroxy-3-oxobutyl phosphate and 5-amino-6-(D-ribitylamino)uracil: step 1/2. In terms of biological role, catalyzes the formation of 6,7-dimethyl-8-ribityllumazine by condensation of 5-amino-6-(D-ribitylamino)uracil with 3,4-dihydroxy-2-butanone 4-phosphate. This is the penultimate step in the biosynthesis of riboflavin. The chain is 6,7-dimethyl-8-ribityllumazine synthase from Bordetella bronchiseptica (strain ATCC BAA-588 / NCTC 13252 / RB50) (Alcaligenes bronchisepticus).